A 204-amino-acid polypeptide reads, in one-letter code: Serotonin N-acetyltransferase (204 aa).

At Thr-28 the chain carries Phosphothreonine; by PKA. The 162-residue stretch at 32-193 (SEFRCLTPED…SFTELHCSLQ (162 aa)) folds into the N-acetyltransferase domain. Leu-121 contributes to the substrate binding site. Acetyl-CoA contacts are provided by residues 121 to 123 (LAV) and 129 to 134 (QQGRGP). Residue Met-156 participates in substrate binding. 165–167 (YER) contributes to the acetyl-CoA binding site. Ser-202 is subject to Phosphoserine.

This sequence belongs to the acetyltransferase family. AANAT subfamily. In terms of assembly, monomer. Interacts with several 14-3-3 proteins, including YWHAB, YWHAE, YWHAG and YWHAZ, preferentially when phosphorylated at Thr-28. Phosphorylation on Ser-202 also allows binding to YWHAZ, but with lower affinity. The interaction with YWHAZ considerably increases affinity for arylalkylamines and acetyl-CoA and protects the enzyme from dephosphorylation and proteasomal degradation. It may also prevent thiol-dependent inactivation. CAMP-dependent phosphorylation regulates AANAT activity by promoting interaction with 14-3-3 proteins. Phosphorylation levels exhibit night/day variations, with an increase during nighttime. As to expression, highly expressed in pineal gland and in the photoreceptor outer segments in the retina. Expressed at about 100-fold lower levels in the pituitary gland and testis. Not detected in other tissues.

It is found in the cytoplasm. The enzyme catalyses a 2-arylethylamine + acetyl-CoA = an N-acetyl-2-arylethylamine + CoA + H(+). The protein operates within aromatic compound metabolism; melatonin biosynthesis; melatonin from serotonin: step 1/2. In terms of biological role, controls the night/day rhythm of melatonin production in the pineal gland. Catalyzes the N-acetylation of serotonin into N-acetylserotonin, the penultimate step in the synthesis of melatonin. The polypeptide is Serotonin N-acetyltransferase (AANAT) (Macaca mulatta (Rhesus macaque)).